Reading from the N-terminus, the 1249-residue chain is AMB antimetabolite synthetase AmbB (1249 aa).

The segment at 245–633 (FEAQARRTPQ…LGRLDDQVKF (389 aa)) is adenylation. Residues 716-735 (IDRKALPRPQATGAEPQALP) form a disordered region. The Carrier domain maps to 734–809 (LPSDPLEQAL…ALLELLRQAA (76 aa)). At Ser-768 the chain carries O-(pantetheine 4'-phosphoryl)serine. Positions 823–1150 (GLSLAERRLW…CVTQALRQRG (328 aa)) are condensation.

It belongs to the NRP synthetase family. Pantetheine 4'-phosphate serves as cofactor.

It catalyses the reaction holo-[peptidyl-carrier protein] + L-alanine + ATP = L-alanyl-[peptidyl-carrier protein] + AMP + diphosphate. Functionally, involved in the biosynthesis of the antimetabolite L-2-amino-4-methoxy-trans-3-butenoic acid (AMB), a non-proteinogenic amino acid which is toxic for prokaryotes and eukaryotes. Adenylates L-alanine and loads it onto its peptidyl carrier domain via a thioester linkage to the phosphopanthetheine moiety. In addition, loads activated L-Ala in trans onto the second carrier domain of AmbE. Can also activate L-Ser, Gly and D-Ala, albeit to a lower extent. The condensation domain of AmbB probably condenses the activated L-Ala and the L-Glu loaded on AmbE to form a L-Glu-L-Ala dipeptide at the first carrier domain of AmbE. This Pseudomonas aeruginosa (strain ATCC 15692 / DSM 22644 / CIP 104116 / JCM 14847 / LMG 12228 / 1C / PRS 101 / PAO1) protein is AMB antimetabolite synthetase AmbB.